The primary structure comprises 676 residues: Mediator of RNA polymerase II transcription subunit 17 (676 aa).

Disordered regions lie at residues 27 to 68 and 117 to 176; these read IGSK…QFSN and IEND…TQDT. The segment covering 29–40 has biased composition (low complexity); sequence SKSTSPHSNSTS. 2 stretches are compositionally biased toward basic and acidic residues: residues 47 to 56 and 120 to 134; these read HNTENEEVDN and DNGK…KAED. Residues 135–145 are compositionally biased toward acidic residues; it reads GIDTMDIDQND. A compositionally biased stretch (polar residues) spans 146-160; that stretch reads NSEANTNDIGYNEWS.

The protein belongs to the Mediator complex subunit 17 family. In terms of assembly, component of the Mediator complex.

The protein localises to the nucleus. Functionally, component of the Mediator complex, a coactivator involved in the regulated transcription of nearly all RNA polymerase II-dependent genes. Mediator functions as a bridge to convey information from gene-specific regulatory proteins to the basal RNA polymerase II transcription machinery. Mediator is recruited to promoters by direct interactions with regulatory proteins and serves as a scaffold for the assembly of a functional preinitiation complex with RNA polymerase II and the general transcription factors. In Candida glabrata (strain ATCC 2001 / BCRC 20586 / JCM 3761 / NBRC 0622 / NRRL Y-65 / CBS 138) (Yeast), this protein is Mediator of RNA polymerase II transcription subunit 17 (SRB4).